Reading from the N-terminus, the 250-residue chain is Imidazole glycerol phosphate synthase subunit HisF (250 aa).

Active-site residues include aspartate 11 and aspartate 130.

The protein belongs to the HisA/HisF family. As to quaternary structure, heterodimer of HisH and HisF.

It localises to the cytoplasm. The catalysed reaction is 5-[(5-phospho-1-deoxy-D-ribulos-1-ylimino)methylamino]-1-(5-phospho-beta-D-ribosyl)imidazole-4-carboxamide + L-glutamine = D-erythro-1-(imidazol-4-yl)glycerol 3-phosphate + 5-amino-1-(5-phospho-beta-D-ribosyl)imidazole-4-carboxamide + L-glutamate + H(+). It participates in amino-acid biosynthesis; L-histidine biosynthesis; L-histidine from 5-phospho-alpha-D-ribose 1-diphosphate: step 5/9. Functionally, IGPS catalyzes the conversion of PRFAR and glutamine to IGP, AICAR and glutamate. The HisF subunit catalyzes the cyclization activity that produces IGP and AICAR from PRFAR using the ammonia provided by the HisH subunit. The sequence is that of Imidazole glycerol phosphate synthase subunit HisF from Elusimicrobium minutum (strain Pei191).